Reading from the N-terminus, the 146-residue chain is Hemoglobin subunit beta (146 aa).

At Val-1 the chain carries N-acetylvaline. The Globin domain occupies 2–146; it reads HLTGEEKSLV…VANALAHKYH (145 aa). Thr-12 is modified (phosphothreonine). At Ser-44 the chain carries Phosphoserine. An N6-acetyllysine modification is found at Lys-59. His-63 contributes to the heme b binding site. Lys-82 bears the N6-acetyllysine mark. Position 92 (His-92) interacts with heme b. At Cys-93 the chain carries S-nitrosocysteine. Lys-144 bears the N6-acetyllysine mark.

This sequence belongs to the globin family. Heterotetramer of two alpha chains and two beta chains. In terms of tissue distribution, red blood cells.

In terms of biological role, involved in oxygen transport from the lung to the various peripheral tissues. The sequence is that of Hemoglobin subunit beta (HBB) from Ursus maritimus (Polar bear).